Consider the following 255-residue polypeptide: Diphthine synthase (255 aa).

Residues Leu9, Asp85, Val88, 113–114, Leu164, Ala207, and His232 each bind S-adenosyl-L-methionine; that span reads SI.

It belongs to the diphthine synthase family. In terms of assembly, homodimer.

It catalyses the reaction 2-[(3S)-amino-3-carboxypropyl]-L-histidyl-[translation elongation factor 2] + 3 S-adenosyl-L-methionine = diphthine-[translation elongation factor 2] + 3 S-adenosyl-L-homocysteine + 3 H(+). Its pathway is protein modification; peptidyl-diphthamide biosynthesis. In terms of biological role, S-adenosyl-L-methionine-dependent methyltransferase that catalyzes the trimethylation of the amino group of the modified target histidine residue in translation elongation factor 2 (EF-2), to form an intermediate called diphthine. The three successive methylation reactions represent the second step of diphthamide biosynthesis. This Methanococcus maripaludis (strain C6 / ATCC BAA-1332) protein is Diphthine synthase.